A 369-amino-acid polypeptide reads, in one-letter code: Peptide chain release factor 2 (369 aa).

N5-methylglutamine is present on Gln-252.

Belongs to the prokaryotic/mitochondrial release factor family. Methylated by PrmC. Methylation increases the termination efficiency of RF2.

It localises to the cytoplasm. Functionally, peptide chain release factor 2 directs the termination of translation in response to the peptide chain termination codons UGA and UAA. This Staphylococcus aureus (strain bovine RF122 / ET3-1) protein is Peptide chain release factor 2.